The primary structure comprises 174 residues: Adenine phosphoribosyltransferase (174 aa).

Belongs to the purine/pyrimidine phosphoribosyltransferase family. In terms of assembly, homodimer.

The protein resides in the cytoplasm. The enzyme catalyses AMP + diphosphate = 5-phospho-alpha-D-ribose 1-diphosphate + adenine. It functions in the pathway purine metabolism; AMP biosynthesis via salvage pathway; AMP from adenine: step 1/1. In terms of biological role, catalyzes a salvage reaction resulting in the formation of AMP, that is energically less costly than de novo synthesis. The chain is Adenine phosphoribosyltransferase from Nitrosomonas europaea (strain ATCC 19718 / CIP 103999 / KCTC 2705 / NBRC 14298).